Consider the following 249-residue polypeptide: Vitamin B12 import ATP-binding protein BtuD (249 aa).

Residues 1–233 (MSIVMQLQDV…PNLAQAYGMN (233 aa)) form the ABC transporter domain. 33–40 (GPNGAGKS) is an ATP binding site.

The protein belongs to the ABC transporter superfamily. Vitamin B12 importer (TC 3.A.1.13.1) family. The complex is composed of two ATP-binding proteins (BtuD), two transmembrane proteins (BtuC) and a solute-binding protein (BtuF).

Its subcellular location is the cell inner membrane. It carries out the reaction an R-cob(III)alamin(out) + ATP + H2O = an R-cob(III)alamin(in) + ADP + phosphate + H(+). Functionally, part of the ABC transporter complex BtuCDF involved in vitamin B12 import. Responsible for energy coupling to the transport system. This Escherichia coli (strain K12 / DH10B) protein is Vitamin B12 import ATP-binding protein BtuD.